The sequence spans 638 residues: 1-deoxy-D-xylulose-5-phosphate synthase (638 aa).

Thiamine diphosphate contacts are provided by residues H76 and 117–119; that span reads AHS. Position 148 (D148) interacts with Mg(2+). Thiamine diphosphate-binding positions include 149–150, N177, Y287, and E369; that span reads GS. N177 is a Mg(2+) binding site.

Belongs to the transketolase family. DXPS subfamily. Homodimer. The cofactor is Mg(2+). Thiamine diphosphate serves as cofactor.

It catalyses the reaction D-glyceraldehyde 3-phosphate + pyruvate + H(+) = 1-deoxy-D-xylulose 5-phosphate + CO2. The protein operates within metabolic intermediate biosynthesis; 1-deoxy-D-xylulose 5-phosphate biosynthesis; 1-deoxy-D-xylulose 5-phosphate from D-glyceraldehyde 3-phosphate and pyruvate: step 1/1. Catalyzes the acyloin condensation reaction between C atoms 2 and 3 of pyruvate and glyceraldehyde 3-phosphate to yield 1-deoxy-D-xylulose-5-phosphate (DXP). The chain is 1-deoxy-D-xylulose-5-phosphate synthase from Rhodopseudomonas palustris (strain BisB5).